The primary structure comprises 385 residues: Chaperone protein DnaJ 2 (385 aa).

Residues 10-75 (DYYKELGVSS…AKRKEYDETR (66 aa)) form the J domain. A CR-type zinc finger spans residues 155–233 (GVTVPLRMTS…CHGSGIQNRT (79 aa)). 8 residues coordinate Zn(2+): Cys168, Cys171, Cys185, Cys188, Cys207, Cys210, Cys221, and Cys224. CXXCXGXG motif repeat units follow at residues 168–175 (CTTCHGSG), 185–192 (CPICNGTG), 207–214 (CDGCRGTG), and 221–228 (CVDCHGSG).

This sequence belongs to the DnaJ family. As to quaternary structure, homodimer. It depends on Zn(2+) as a cofactor.

Its subcellular location is the cytoplasm. In terms of biological role, participates actively in the response to hyperosmotic and heat shock by preventing the aggregation of stress-denatured proteins and by disaggregating proteins, also in an autonomous, DnaK-independent fashion. Unfolded proteins bind initially to DnaJ; upon interaction with the DnaJ-bound protein, DnaK hydrolyzes its bound ATP, resulting in the formation of a stable complex. GrpE releases ADP from DnaK; ATP binding to DnaK triggers the release of the substrate protein, thus completing the reaction cycle. Several rounds of ATP-dependent interactions between DnaJ, DnaK and GrpE are required for fully efficient folding. Also involved, together with DnaK and GrpE, in the DNA replication of plasmids through activation of initiation proteins. The chain is Chaperone protein DnaJ 2 from Nocardia farcinica (strain IFM 10152).